We begin with the raw amino-acid sequence, 265 residues long: 3-methyl-2-oxobutanoate hydroxymethyltransferase (265 aa).

Residues Asp-46 and Asp-85 each coordinate Mg(2+). 3-methyl-2-oxobutanoate contacts are provided by residues 46 to 47 (DS), Asp-85, and Lys-114. Glu-116 provides a ligand contact to Mg(2+). Catalysis depends on Glu-183, which acts as the Proton acceptor.

This sequence belongs to the PanB family. Homodecamer; pentamer of dimers. Mg(2+) is required as a cofactor.

It is found in the cytoplasm. The enzyme catalyses 3-methyl-2-oxobutanoate + (6R)-5,10-methylene-5,6,7,8-tetrahydrofolate + H2O = 2-dehydropantoate + (6S)-5,6,7,8-tetrahydrofolate. It participates in cofactor biosynthesis; coenzyme A biosynthesis. In terms of biological role, catalyzes the reversible reaction in which hydroxymethyl group from 5,10-methylenetetrahydrofolate is transferred onto alpha-ketoisovalerate to form ketopantoate. This chain is 3-methyl-2-oxobutanoate hydroxymethyltransferase, found in Pyrobaculum calidifontis (strain DSM 21063 / JCM 11548 / VA1).